The primary structure comprises 156 residues: Small ribosomal subunit protein uS7 (156 aa).

It belongs to the universal ribosomal protein uS7 family. Part of the 30S ribosomal subunit. Contacts proteins S9 and S11.

Functionally, one of the primary rRNA binding proteins, it binds directly to 16S rRNA where it nucleates assembly of the head domain of the 30S subunit. Is located at the subunit interface close to the decoding center, probably blocks exit of the E-site tRNA. The chain is Small ribosomal subunit protein uS7 from Dictyoglomus thermophilum (strain ATCC 35947 / DSM 3960 / H-6-12).